Consider the following 155-residue polypeptide: Fibroblast growth factor 2 (155 aa).

The propeptide occupies 1–9 (MAAGSITTL). Over residues 1–11 (MAAGSITTLPT) the composition is skewed to polar residues. Positions 1–24 (MAAGSITTLPTESEDGGNTPFSPG) are disordered. Heparin contacts are provided by residues 27–31 (KDPKR) and 116–119 (RSRK).

It belongs to the heparin-binding growth factors family.

It localises to the secreted. The protein localises to the nucleus. Functionally, acts as a ligand for FGFR1, FGFR2, FGFR3 and FGFR4. Also acts as an integrin ligand which is required for FGF2 signaling. Plays an important role in the regulation of cell survival, cell division, cell differentiation and cell migration. Functions as a potent mitogen in vitro. Can induce angiogenesis. The sequence is that of Fibroblast growth factor 2 (fgf2) from Xenopus laevis (African clawed frog).